The following is a 644-amino-acid chain: CTP synthase (644 aa).

The Glutamine amidotransferase type-1 domain occupies 300–551 (SIAIVGKYTK…LGLILASVDR (252 aa)). Residues cysteine 399, histidine 527, and glutamate 529 each act as for GATase activity in the active site.

Belongs to the CTP synthase family.

It catalyses the reaction UTP + L-glutamine + ATP + H2O = CTP + L-glutamate + ADP + phosphate + 2 H(+). It participates in pyrimidine metabolism; CTP biosynthesis via de novo pathway; CTP from UDP: step 2/2. Its function is as follows. Catalyzes the ATP-dependent amination of UTP to CTP with either L-glutamine or ammonia as the source of nitrogen. Constitutes the rate-limiting enzyme in the synthesis of cytosine nucleotides. The chain is CTP synthase from Drosophila pseudoobscura pseudoobscura (Fruit fly).